Consider the following 1261-residue polypeptide: Pentatricopeptide repeat-containing protein 5, mitochondrial (1261 aa).

PPR repeat units follow at residues 365-404, 405-442, 443-479, 480-514, 550-584, 806-849, 852-886, 887-924, 925-959, 960-995, 996-1031, 1032-1068, 1109-1143, 1144-1179, and 1180-1214; these read HPDL…TSMT, NVRS…NQVI, PSSI…TYKA, SPST…RFSD, TNFT…KVSL, HPEV…EKAN, MALI…GYIP, RAST…NVKP, SVFL…GLLP, TSVT…NYQP, RVAP…DIEP, SSHT…DVPI, DANL…NVSL, NAYI…MSGK, and EPST…RYPL. A disordered region spans residues 1225–1261; it reads NSHMGQKPKRRSLNTSHSSLASLGNASTQHSINSSIN. Residues 1237 to 1261 show a composition bias toward polar residues; it reads LNTSHSSLASLGNASTQHSINSSIN.

Its subcellular location is the mitochondrion. In terms of biological role, mitochondrial RNA-binding protein that acts as a general negative regulator of mitochondrial translation. The polypeptide is Pentatricopeptide repeat-containing protein 5, mitochondrial (ppr5) (Schizosaccharomyces pombe (strain 972 / ATCC 24843) (Fission yeast)).